The sequence spans 53 residues: Large ribosomal subunit protein eL40 (53 aa).

Belongs to the eukaryotic ribosomal protein eL40 family.

The chain is Large ribosomal subunit protein eL40 from Pyrobaculum islandicum (strain DSM 4184 / JCM 9189 / GEO3).